The chain runs to 434 residues: Mannose-6-phosphate isomerase (434 aa).

Residues Gln109, His111, and Glu136 each coordinate Zn(2+). Positions 181–191 (SLGLPTSQPPD) are enriched in polar residues. A disordered region spans residues 181 to 200 (SLGLPTSQPPDTSLFKPTES). His291 lines the Zn(2+) pocket. Arg310 is a catalytic residue.

The protein belongs to the mannose-6-phosphate isomerase type 1 family. It depends on Zn(2+) as a cofactor.

Its subcellular location is the cytoplasm. It catalyses the reaction D-mannose 6-phosphate = D-fructose 6-phosphate. The protein operates within nucleotide-sugar biosynthesis; GDP-alpha-D-mannose biosynthesis; alpha-D-mannose 1-phosphate from D-fructose 6-phosphate: step 1/2. In terms of biological role, involved in the synthesis of the GDP-mannose and dolichol-phosphate-mannose required for a number of critical mannosyl transfer reactions. The polypeptide is Mannose-6-phosphate isomerase (MAN1) (Cryptococcus neoformans var. neoformans serotype D (strain JEC21 / ATCC MYA-565) (Filobasidiella neoformans)).